A 142-amino-acid chain; its full sequence is MARARGRGRRDLKSEINIVPLLDVLLVLLLIFMATAPIITQSVEVDLPDATESQAVSSNDNPPVIVEVSGIGQYTVVVEKDRLERLPPEQVVAEVSSRFKANPKTVFLIGGAKDVPYDEIIKALNLLHSAGVKSVGLMTQPI.

Over 1–17 (MARARGRGRRDLKSEIN) the chain is Cytoplasmic. A helical membrane pass occupies residues 18–38 (IVPLLDVLLVLLLIFMATAPI). Over 39–142 (ITQSVEVDLP…KSVGLMTQPI (104 aa)) the chain is Periplasmic.

This sequence belongs to the ExbD/TolR family. As to quaternary structure, the Tol-Pal system is composed of five core proteins: the inner membrane proteins TolA, TolQ and TolR, the periplasmic protein TolB and the outer membrane protein Pal. They form a network linking the inner and outer membranes and the peptidoglycan layer.

Its subcellular location is the cell inner membrane. In terms of biological role, part of the Tol-Pal system, which plays a role in outer membrane invagination during cell division and is important for maintaining outer membrane integrity. Required, with TolQ, for the proton motive force-dependent activation of TolA and for TolA-Pal interaction. This Escherichia coli O157:H7 protein is Tol-Pal system protein TolR.